Reading from the N-terminus, the 276-residue chain is Secretagogin (276 aa).

EF-hand domains follow at residues 12–47 (LDAA…MLTK), 71–93 (DVSK…EDEN), 105–140 (DSSV…LFLH), 149–184 (KLEE…QENF), 197–232 (ERKR…MMEL), and 240–276 (VDLD…KINP). The Ca(2+) site is built by D71, S73, D75, C77, E82, D118, D120, S122, E129, D162, N164, D166, R168, D173, D210, S212, T214, E221, D254, N256, D258, K260, and E265.

It is found in the cytoplasm. Its subcellular location is the secreted. The protein resides in the cytoplasmic vesicle. It localises to the secretory vesicle membrane. This chain is Secretagogin (SCGN), found in Bos taurus (Bovine).